The sequence spans 506 residues: Aldehyde dehydrogenase [NAD(P)+] 2 (506 aa).

Glu268 acts as the Proton acceptor in catalysis. Residue Cys302 is the Nucleophile of the active site.

The protein belongs to the aldehyde dehydrogenase family.

The protein resides in the cytoplasm. It catalyses the reaction an aldehyde + NAD(+) + H2O = a carboxylate + NADH + 2 H(+). The enzyme catalyses 3-aminopropanal + NAD(+) + H2O = beta-alanine + NADH + 2 H(+). Its function is as follows. Cytoplasmic aldehyde dehydrogenase involved in ethanol oxidation. Involved in pantothenic acid production through the conversion of 3-aminopropanal to beta-alanine, an intermediate in pantothenic acid (vitamin B5) and coenzyme A (CoA) biosynthesis. The sequence is that of Aldehyde dehydrogenase [NAD(P)+] 2 (ALD3) from Saccharomyces cerevisiae (strain ATCC 204508 / S288c) (Baker's yeast).